A 161-amino-acid polypeptide reads, in one-letter code: MAKKKSKQKAGSNTIALNKKARHEYFIEDEIEAGLELQGWEVKALRQGKANISESYVFMRDGEAFVSGMTITPLNQASTHVVANPTRVRKLLMSRRELDNLLGRINREGMTLTALSLYWSRSWVKIKIGVAKGKKLHDKRTDLKEKDWAREKARVMKSALR.

It belongs to the SmpB family.

The protein localises to the cytoplasm. In terms of biological role, required for rescue of stalled ribosomes mediated by trans-translation. Binds to transfer-messenger RNA (tmRNA), required for stable association of tmRNA with ribosomes. tmRNA and SmpB together mimic tRNA shape, replacing the anticodon stem-loop with SmpB. tmRNA is encoded by the ssrA gene; the 2 termini fold to resemble tRNA(Ala) and it encodes a 'tag peptide', a short internal open reading frame. During trans-translation Ala-aminoacylated tmRNA acts like a tRNA, entering the A-site of stalled ribosomes, displacing the stalled mRNA. The ribosome then switches to translate the ORF on the tmRNA; the nascent peptide is terminated with the 'tag peptide' encoded by the tmRNA and targeted for degradation. The ribosome is freed to recommence translation, which seems to be the essential function of trans-translation. This Vibrio parahaemolyticus serotype O3:K6 (strain RIMD 2210633) protein is SsrA-binding protein.